Consider the following 90-residue polypeptide: Probable Fe(2+)-trafficking protein (90 aa).

The protein belongs to the Fe(2+)-trafficking protein family.

In terms of biological role, could be a mediator in iron transactions between iron acquisition and iron-requiring processes, such as synthesis and/or repair of Fe-S clusters in biosynthetic enzymes. This is Probable Fe(2+)-trafficking protein from Xylella fastidiosa (strain 9a5c).